A 527-amino-acid chain; its full sequence is Zinc finger C2HC domain-containing protein 1C (527 aa).

2 disordered regions span residues 18–105 (HNKT…GQGK) and 145–170 (VHRKSHSTSDAGADGDQNGYPRLPDS). Residues 50–61 (NSFQSKLWSNTE) are compositionally biased toward polar residues. Over residues 71–85 (RPKRNVCTKARRHSC) the composition is skewed to basic residues. Residues 93-102 (QQGSGNNAQG) show a composition bias toward low complexity. The stretch at 207 to 254 (TQIQRLEAAGESLQKEIRRKEILLQEKLKKTEEGLRRMQKEKKQAIFQ) forms a coiled coil. 2 disordered regions span residues 264–316 (LPRR…LSDY) and 352–379 (LGSTLQESSRSGTPGSSGSSSSTEEPEL). Positions 286-298 (FRSEVFSRNRGED) are enriched in basic and acidic residues. Positions 301–312 (CDQAQENPSPRQ) are enriched in polar residues. Residues 358–374 (ESSRSGTPGSSGSSSST) are compositionally biased toward low complexity. C2HC/C3H-type zinc fingers lie at residues 378–407 (ELAKCSHCGRSFLSLRLQRHSTVCGKMQGS) and 489–518 (DYVQCPHCSRHFAPKVAERHIPKCKTIKNR). C382, C385, H397, C401, C493, C496, H508, and C512 together coordinate Zn(2+). The disordered stretch occupies residues 507–527 (RHIPKCKTIKNRPPPPRRHDS).

This sequence belongs to the ZC2HC1 family. The cofactor is Zn(2+).

The protein is Zinc finger C2HC domain-containing protein 1C (Zc2hc1c) of Mus musculus (Mouse).